Consider the following 262-residue polypeptide: Phosphonates import ATP-binding protein PhnC (262 aa).

Positions 5-253 (IRVEKLAKTF…RFDHLYRSIN (249 aa)) constitute an ABC transporter domain. 37-44 (GPSGSGKS) lines the ATP pocket.

This sequence belongs to the ABC transporter superfamily. Phosphonates importer (TC 3.A.1.9.1) family. In terms of assembly, the complex is composed of two ATP-binding proteins (PhnC), two transmembrane proteins (PhnE) and a solute-binding protein (PhnD).

It is found in the cell inner membrane. It carries out the reaction phosphonate(out) + ATP + H2O = phosphonate(in) + ADP + phosphate + H(+). In terms of biological role, part of the ABC transporter complex PhnCDE involved in phosphonates import. Responsible for energy coupling to the transport system. The protein is Phosphonates import ATP-binding protein PhnC of Escherichia coli (strain UTI89 / UPEC).